The chain runs to 327 residues: Cyclic AMP-responsive element-binding protein 1 (327 aa).

2 disordered regions span residues 1–27 and 94–113; these read MTME…QMTV and SEDS…RREI. In terms of domain architecture, KID spans 87-146; sequence QISTIAESEDSQESVDSVTDSQKRREILSRRPSYRKILNDLSSDAPGVPRIEEEKSEEET. Phosphoserine; by CaMK1, CaMK2, CaMK4, PKB/AKT1 or PKB/AKT2, RPS6KA3, RPS6KA4, RPS6KA5 and SGK1 is present on serine 119. Residue lysine 122 forms a Glycyl lysine isopeptide (Lys-Gly) (interchain with G-Cter in SUMO2) linkage. The interval 126–151 is disordered; that stretch reads DLSSDAPGVPRIEEEKSEEETSAPAI. Serine 128 is modified (phosphoserine; by CaMK2). At serine 257 the chain carries Phosphoserine; by HIPK2. The bZIP domain maps to 269-327; that stretch reads ARKREVRLMKNREAARECRRKKKEYVKCLENRVAVLENQNKTLIEELKALKDLYCHKSD. The segment at 270–295 is basic motif; that stretch reads RKREVRLMKNREAARECRRKKKEYVK. Glycyl lysine isopeptide (Lys-Gly) (interchain with G-Cter in SUMO1) cross-links involve residues lysine 271 and lysine 290. The tract at residues 297–318 is leucine-zipper; it reads LENRVAVLENQNKTLIEELKAL.

This sequence belongs to the bZIP family. Interacts with PPRC1. Binds DNA as a dimer. This dimer is stabilized by magnesium ions. Interacts, through the bZIP domain, with the coactivators CRTC1/TORC1, CRTC2/TORC2 and CRTC3/TORC3. Interacts (phosphorylated form) with TOX3. When phosphorylated on Ser-119, binds CREBBP. Interacts with ARRB1. Binds to HIPK2. Interacts with SGK1. Interacts with CREBL2; regulates CREB1 phosphorylation, stability and transcriptional activity. Interacts with TSSK4; this interaction facilitates phosphorylation on Ser-119. Forms a complex with KMT2A and CREBBP. Interacts with TOX4; CREB1 is required for full induction of TOX4-dependent activity and the interaction is increased by cAMP and inhibited by insulin. In terms of processing, phosphorylation of Ser-119 allows CREBBP binding. Stimulated by phosphorylation. Phosphorylated Ser-128 can be detected in the suprachiasmatic nucleus (SCN), the amygdala, the cortex, and the hippocampus but not in the striatum nor in the cerebellum. In the SCN, phosphorylation of Ser-128 and Ser-119 are stimulated by light exposure and submitted to circadian oscillations. In the retina, only phosphorylation of Ser-119 can be detected upon light exposure. Phosphorylation of both Ser-119 and Ser-128 in the SCN regulates the activity of CREB and participates in circadian rhythm generation. Phosphorylated upon calcium influx by CaMK4 and CaMK2 on Ser-119. CaMK4 is much more potent than CAMK2 in activating CREB. Phosphorylated by CaMK2 on Ser-128. Phosphorylation of Ser-128 blocks CREB-mediated transcription even when Ser-119 is phosphorylated. Phosphorylated by CaMK1. Phosphorylation of Ser-271 by HIPK2 in response to genotoxic stress promotes CREB1 activity, facilitating the recruitment of the coactivator CBP. Phosphorylated at Ser-119 by RPS6KA3, RPS6KA4 and RPS6KA5 in response to mitogenic or stress stimuli. CREBL2 positively regulates phosphorylation at Ser-119 thereby stimulating CREB1 transcriptional activity. In liver, phosphorylation is induced by fasting or glucagon in a circadian fashion. Phosphorylated by TSSK4 on Ser-119. Post-translationally, sumoylated with SUMO1. Sumoylation on Lys-290, but not on Lys-271, is required for nuclear localization of this protein. Sumoylation is enhanced under hypoxia, promoting nuclear localization and stabilization. As to expression, expressed in the heart (at protein level).

It is found in the nucleus. Its function is as follows. Phosphorylation-dependent transcription factor that stimulates transcription upon binding to the DNA cAMP response element (CRE), a sequence present in many viral and cellular promoters. Transcription activation is enhanced by the TORC coactivators which act independently of Ser-119 phosphorylation. Involved in different cellular processes including the synchronization of circadian rhythmicity and the differentiation of adipose cells. Regulates the expression of apoptotic and inflammatory response factors in cardiomyocytes in response to ERFE-mediated activation of AKT signaling. In Mus musculus (Mouse), this protein is Cyclic AMP-responsive element-binding protein 1 (Creb1).